A 171-amino-acid polypeptide reads, in one-letter code: MNKANSFNKEELIACGHGKLFGPNSPRLPVDNMLMMDRIVTINDNGGEFGKGEIVAELDINPDLWFFDCHFITDPVMPGCLGLDAMWQLVGFYLGWEGAEGKGRALGVGEVKFTGQVLPGAKKVTYKLNIKRTIHRKLVMGIADAILEVDGRQIYSATDLKVGVFSDTSTF.

The active site involves histidine 70.

It belongs to the thioester dehydratase family. FabA subfamily. In terms of assembly, homodimer.

It localises to the cytoplasm. It carries out the reaction a (3R)-hydroxyacyl-[ACP] = a (2E)-enoyl-[ACP] + H2O. The catalysed reaction is (3R)-hydroxydecanoyl-[ACP] = (2E)-decenoyl-[ACP] + H2O. It catalyses the reaction (2E)-decenoyl-[ACP] = (3Z)-decenoyl-[ACP]. It functions in the pathway lipid metabolism; fatty acid biosynthesis. Its function is as follows. Necessary for the introduction of cis unsaturation into fatty acids. Catalyzes the dehydration of (3R)-3-hydroxydecanoyl-ACP to E-(2)-decenoyl-ACP and then its isomerization to Z-(3)-decenoyl-ACP. Can catalyze the dehydratase reaction for beta-hydroxyacyl-ACPs with saturated chain lengths up to 16:0, being most active on intermediate chain length. The sequence is that of 3-hydroxydecanoyl-[acyl-carrier-protein] dehydratase from Shewanella baltica (strain OS223).